A 122-amino-acid chain; its full sequence is uncharacterized protein (122 aa).

The segment covering 79–90 (NERVTSRVTNSR) has biased composition (polar residues). Residues 79–122 (NERVTSRVTNSRTESESNGNGNATGNTSSNANSNGNANGIYIRK) form a disordered region. The span at 94–122 (ESNGNGNATGNTSSNANSNGNANGIYIRK) shows a compositional bias: low complexity.

This is an uncharacterized protein from Leptolyngbya boryana (Plectonema boryanum).